The following is a 227-amino-acid chain: Cytidylate kinase (227 aa).

12–20 lines the ATP pocket; that stretch reads GPSGAGKGT.

This sequence belongs to the cytidylate kinase family. Type 1 subfamily.

Its subcellular location is the cytoplasm. The catalysed reaction is CMP + ATP = CDP + ADP. It catalyses the reaction dCMP + ATP = dCDP + ADP. This is Cytidylate kinase from Salmonella paratyphi B (strain ATCC BAA-1250 / SPB7).